We begin with the raw amino-acid sequence, 368 residues long: Seipin-1 (368 aa).

3 helical membrane-spanning segments follow: residues 26–46 (WFMV…VVLS), 101–121 (VMVL…SLYV), and 292–312 (LCVW…LWCF). A disordered region spans residues 344–368 (MERRRRERRNQPRRRNFATTQKSYT). Residues 346–359 (RRRRERRNQPRRRN) show a composition bias toward basic residues.

The protein belongs to the seipin family. As to expression, expressed in seeds and young seedlings. Not detected in leaves.

It is found in the endoplasmic reticulum membrane. In terms of biological role, involved in lipid metabolism and lipid droplet (LD) morphology, number, and size. Facilitates the formation of large-sized LDs and modulates triacylglycerol accumulation. Induces probably a reorganization of the endoplasmic reticulum into LD-forming domains. This Arabidopsis thaliana (Mouse-ear cress) protein is Seipin-1.